A 222-amino-acid chain; its full sequence is Peptide methionine sulfoxide reductase MsrA 1 (222 aa).

Residue C57 is part of the active site.

Belongs to the MsrA Met sulfoxide reductase family.

It carries out the reaction L-methionyl-[protein] + [thioredoxin]-disulfide + H2O = L-methionyl-(S)-S-oxide-[protein] + [thioredoxin]-dithiol. The enzyme catalyses [thioredoxin]-disulfide + L-methionine + H2O = L-methionine (S)-S-oxide + [thioredoxin]-dithiol. Its function is as follows. Has an important function as a repair enzyme for proteins that have been inactivated by oxidation. Catalyzes the reversible oxidation-reduction of methionine sulfoxide in proteins to methionine. This chain is Peptide methionine sulfoxide reductase MsrA 1 (msrA1), found in Synechocystis sp. (strain ATCC 27184 / PCC 6803 / Kazusa).